Reading from the N-terminus, the 196-residue chain is Protein GrpE (196 aa).

Positions 1–39 (MSSKEQKTPEGQAPEEIIMDQHEEIEAVEPEASAEQVDP) are disordered.

The protein belongs to the GrpE family. Homodimer.

Its subcellular location is the cytoplasm. Its function is as follows. Participates actively in the response to hyperosmotic and heat shock by preventing the aggregation of stress-denatured proteins, in association with DnaK and GrpE. It is the nucleotide exchange factor for DnaK and may function as a thermosensor. Unfolded proteins bind initially to DnaJ; upon interaction with the DnaJ-bound protein, DnaK hydrolyzes its bound ATP, resulting in the formation of a stable complex. GrpE releases ADP from DnaK; ATP binding to DnaK triggers the release of the substrate protein, thus completing the reaction cycle. Several rounds of ATP-dependent interactions between DnaJ, DnaK and GrpE are required for fully efficient folding. The protein is Protein GrpE of Escherichia coli O139:H28 (strain E24377A / ETEC).